The chain runs to 7354 residues: Microtubule-actin cross-linking factor 1, isoforms 1/2/3/4 (7354 aa).

Positions 1–47 are disordered; the sequence is MSSSDEETLSERSCRSERSCRSERSYRSERSGSLSPCPPGDTLPWNL. The actin-binding stretch occupies residues 1 to 295; the sequence is MSSSDEETLS…VITYVSSIYD (295 aa). Position 4 is a phosphoserine (serine 4). Positions 9-30 are enriched in basic and acidic residues; that stretch reads LSERSCRSERSCRSERSYRSER. Serine 35 is modified (phosphoserine). Phosphothreonine is present on threonine 42. A Phosphoserine modification is found at serine 57. Calponin-homology (CH) domains are found at residues 78-181 and 194-298; these read RVQK…LHFQ and MSAK…DAFP. An LRR 1 repeat occupies 148-171; the sequence is QRQVKLVNIRNDDITDGNPKLTLG. At serine 280 the chain carries Phosphoserine. 2 LRR repeats span residues 377–399 and 441–464; these read LYKLLEVWIEFGRIKLPQGYHPN and LNCEEKLTLAKNTLQADAAHLESG. Residues 868 to 925 enclose the SH3 domain; it reads KSTLSVKAICDYRQIEITICKNDECVLEDNSQRTKWKVISPTGNEAMVPSVCFLIPPP. The LRR 5 repeat unit spans residues 1050–1073; sequence ISELKNIRLLLEECEQRLLKQIQS. Serine 1122 bears the Phosphoserine mark. 3 LRR repeats span residues 1128 to 1154, 1187 to 1210, and 1257 to 1282; these read ATTLRSELNLMVEKMDHVYGLSTVYLN, PADLSALESHRTTLQHWLSDVKDK, and HRVIAQLETRQSEVESIQEVLRDYRA. Phosphoserine is present on residues serine 1367 and serine 1376. 5 Plectin repeats span residues 1577 to 1619, 1654 to 1696, 1769 to 1809, 1811 to 1848, and 1855 to 1885; these read LVLL…QLLG, LKVL…ELQS, RLLE…CAIL, RQLQTGGIIDTVTGDRMTIDEAVTNNLVAAKIALVILE, and GLLLPESGEILPITDALEQGIVSTELAHKIL. Serine 2051, serine 2077, and serine 2081 each carry phosphoserine. Composition is skewed to basic and acidic residues over residues 2120-2131 and 2145-2155; these read KEEQAETLREEN and SEGKDLSTEKS. The tract at residues 2120–2155 is disordered; sequence KEEQAETLREENISGDPLLVECPEESEGKDLSTEKS. 5 Plectin repeats span residues 2276–2316, 2352–2393, 2394–2425, 2487–2528, and 2671–2715; these read STLS…VKLM, NVLM…RILE, GQVITGGIVDLKRGKKLSVTLASNLGLVDTAD, LLTK…LRKV, and LKVL…ASHQ. Disordered stretches follow at residues 2806–2841, 2951–2978, and 3058–3099; these read AGIRGSNGEKAEKGRKISVEMEGQRQDEKASSDSKV, EMGGEQSVQMSREAAVLSEEESDQEVTI, and SQET…HISK. Positions 2812–2837 are enriched in basic and acidic residues; sequence NGEKAEKGRKISVEMEGQRQDEKASS. Over residues 2968 to 2978 the composition is skewed to acidic residues; that stretch reads SEEESDQEVTI. Residues serine 3082 and serine 3085 each carry the phosphoserine modification. 3 LRR repeats span residues 3225 to 3244, 3606 to 3630, and 3657 to 3681; these read VGQRGPRVLASLLPEKLPTR, SGKSSLLCAEPKVDLKDLQGDIQSH, and LTALREKLHQAKEQYEVLQERTRVA. Spectrin repeat units follow at residues 3845–3920 and 3962–4070; these read ELQK…NFEE and QYQQ…ALLQ. The residue at position 3889 (serine 3889) is a Phosphoserine. One copy of the LRR 12 repeat lies at 3898–3920; sequence KGDLRFVTISGQKVLETENNFEE. LRR repeat units follow at residues 4087–4112 and 4223–4249; these read LQSIREVEQNLERDQVASLSSGVIQE and IQELTLAMEDQKENLDTLEHLVTTLGS. The Spectrin 3 repeat unit spans residues 4428 to 4536; it reads RMEEVQKEAS…TVARQKQLEE (109 aa). Serine 4458 and serine 4483 each carry phosphoserine. LRR repeat units lie at residues 4473–4496, 4563–4583, and 4728–4751; these read KAFLAELEQNSPKIQKVKEALAGL, GVLGPLSIDPNMLKQQVQFML, and KKRLETVALPLQGLEDLAADRMNR. The Spectrin 4 repeat unit spans residues 4759-4863; that stretch reads TQQFQQMFDE…KTANRQSRLK (105 aa). Serine 4921 is modified (phosphoserine). LRR repeat units follow at residues 5010–5035, 5131–5153, and 5240–5263; these read NKNLEKLKAQQEVLQALEPQVDYLRN, NKIQALRFDIEDSEAECRKMLEE, and KDQVDPLQVKLQQVNGLGQGLIQS. 13 Spectrin repeats span residues 5195–5300, 5307–5409, 5414–5506, 5631–5735, 5742–5844, 5961–6066, 6071–6175, 6181–6284, 6289–6395, 6400–6503, 6508–6614, 6621–6722, and 6726–6830; these read EDFY…QLQE, KFQD…QLED, AKQF…ADIT, RSQQ…ARLE, NQFW…ALDE, LAEK…KLED, AVQY…HKLE, LGQF…QQLQ, QAQG…KLEE, ATEF…RSLD, RAKQ…KLEE, QFMD…RLEQ, and QAEE…QRLE. Threonine 5394 is modified (phosphothreonine). LRR repeat units follow at residues 5654 to 5678 and 5763 to 5787; these read MALGPIRLEQDQTTAQLQVQKAFSI and AQLPPPAVDHEQLRQQQEEMRQLRE. Serine 5988 is subject to Phosphoserine. Lysine 6166 bears the N6-acetyllysine mark. An LRR 23 repeat occupies 6452–6475; the sequence is RDQIIELDQTGNQLKFLSQKQDVV. The segment at 6904–6937 is disordered; it reads SVEPTHAPFMEKSRSGSRKSLNQPTPPPMPILSQ. Residue serine 6923 is modified to Phosphoserine. EF-hand domains lie at 7001 to 7036 and 7037 to 7072; these read HKKSRVMDFFRRIDKDQDGKITRQEFIDGILASKFP and TTKLEMTAVADIFDRDGDGYIDYYEFVAALHPNKDA. Residues aspartate 7014, aspartate 7016, aspartate 7018, lysine 7020, glutamate 7025, aspartate 7050, aspartate 7052, aspartate 7054, tyrosine 7056, and glutamate 7061 each contribute to the Ca(2+) site. A GAR domain is found at 7077–7155; that stretch reads TDADKIEDEV…EFLVKNDPCR (79 aa). Residues 7077-7354 form a C-terminal tail region; it reads TDADKIEDEV…ASPRTPGPKR (278 aa). Residues 7171–7354 form a disordered region; sequence PEGASQGMTP…ASPRTPGPKR (184 aa). The segment covering 7191–7225 has biased composition (low complexity); sequence SSRAASPTRSSSSASQSNHSCTSMPSSPATPASGT. A Phosphothreonine modification is found at threonine 7220. A compositionally biased stretch (polar residues) spans 7242-7261; it reads FHSSRTSLAGDTSNSSSPAS. A phosphoserine mark is found at serine 7245 and serine 7258. Low complexity predominate over residues 7276 to 7290; that stretch reads SRPGSRAGSRAGSRA. Residues 7279 to 7294 are 4 X 4 AA tandem repeats of [GS]-S-R-[AR]; sequence GSRAGSRAGSRASSRR. Serine 7296 and serine 7299 each carry phosphoserine. Residues 7305 to 7315 are compositionally biased toward polar residues; the sequence is ETQSACSDTSE. Residues 7316-7327 are compositionally biased toward low complexity; it reads SSAAGGQGSSRR.

This sequence belongs to the plakin or cytolinker family. Interacts with AXIN1, LRP6 and GOLGA4. Found in a complex composed of MACF1, APC, AXIN1, CTNNB1 and GSK3B. Interacts with MAPRE1, CLASP1 and CLASP2. Interacts with CAMSAP3. Phosphorylated on serine residues in the C-terminal tail by GSK3B. Phosphorylation inhibits microtubule-binding and this plays a critical role in bulge stem cell migration and skin wound repair. Wnt-signaling can repress phosphorylation. Enriched in the hair follicle stem cells (at protein level). Isoform 1 and isoform 2 are ubiquitous expressed, with higher levels seen in lung, heart, thymus, spleen and brain.

The protein resides in the cytoplasm. The protein localises to the cytoskeleton. It localises to the golgi apparatus. Its subcellular location is the cell membrane. It is found in the cell projection. The protein resides in the ruffle membrane. In terms of biological role, F-actin-binding protein which plays a role in cross-linking actin to other cytoskeletal proteins and also binds to microtubules. Plays an important role in ERBB2-dependent stabilization of microtubules at the cell cortex. Acts as a positive regulator of Wnt receptor signaling pathway and is involved in the translocation of AXIN1 and its associated complex (composed of APC, CTNNB1 and GSK3B) from the cytoplasm to the cell membrane. Has actin-regulated ATPase activity and is essential for controlling focal adhesions (FAs) assembly and dynamics. Interaction with CAMSAP3 at the minus ends of non-centrosomal microtubules tethers microtubules minus-ends to actin filaments, regulating focal adhesion size and cell migration. May play role in delivery of transport vesicles containing GPI-linked proteins from the trans-Golgi network through its interaction with GOLGA4. Plays a key role in wound healing and epidermal cell migration. Required for efficient upward migration of bulge cells in response to wounding and this function is primarily rooted in its ability to coordinate microtubule dynamics and polarize hair follicle stem cells. As a regulator of actin and microtubule arrangement and stabilization, it plays an essential role in neurite outgrowth, branching and spine formation during brain development. The sequence is that of Microtubule-actin cross-linking factor 1, isoforms 1/2/3/4 from Mus musculus (Mouse).